The following is a 36-amino-acid chain: Pancreatic polypeptide (36 aa).

Residue Tyr-36 is modified to Tyrosine amide.

This sequence belongs to the NPY family.

Its subcellular location is the secreted. Hormone secreted by pancreatic cells that acts as a regulator of pancreatic and gastrointestinal functions probably by signaling through the G protein-coupled receptor NPY4R2. The sequence is that of Pancreatic polypeptide (PPY) from Ceratotherium simum (White rhinoceros).